The sequence spans 388 residues: LL-diaminopimelate aminotransferase (388 aa).

Residues Tyr-13, Gly-38, Lys-102, Tyr-126, and Asn-176 each coordinate substrate. Pyridoxal 5'-phosphate is bound by residues 101-102, Tyr-126, Asn-176, Tyr-207, and 235-237; these read SK and SLS. Lys-238 is modified (N6-(pyridoxal phosphate)lysine). Pyridoxal 5'-phosphate is bound at residue Arg-246. Substrate is bound at residue Arg-364.

It belongs to the class-I pyridoxal-phosphate-dependent aminotransferase family. LL-diaminopimelate aminotransferase subfamily. In terms of assembly, homodimer. It depends on pyridoxal 5'-phosphate as a cofactor.

It catalyses the reaction (2S,6S)-2,6-diaminopimelate + 2-oxoglutarate = (S)-2,3,4,5-tetrahydrodipicolinate + L-glutamate + H2O + H(+). It participates in amino-acid biosynthesis; L-lysine biosynthesis via DAP pathway; LL-2,6-diaminopimelate from (S)-tetrahydrodipicolinate (aminotransferase route): step 1/1. Its function is as follows. Involved in the synthesis of meso-diaminopimelate (m-DAP or DL-DAP), required for both lysine and peptidoglycan biosynthesis. Catalyzes the direct conversion of tetrahydrodipicolinate to LL-diaminopimelate. This Dehalococcoides mccartyi (strain ATCC BAA-2100 / JCM 16839 / KCTC 5957 / BAV1) protein is LL-diaminopimelate aminotransferase.